The sequence spans 1435 residues: Gag-Pol polyprotein (1435 aa).

G2 carries the N-myristoyl glycine; by host lipid modification. The tract at residues V7 to L31 is interaction with Gp41. Residues L8–R43 are interaction with host CALM1. Residues K12–I19 form an interaction with host AP3D1 region. An interaction with membrane phosphatidylinositol 4,5-bisphosphate and RNA region spans residues D14–H33. The Nuclear export signal motif lies at W16–R22. The Nuclear localization signal signature appears at K26–K32. Positions E73–S77 are interaction with membrane phosphatidylinositol 4,5-bisphosphate. The interval Q108–K127 is disordered. A compositionally biased stretch (polar residues) spans N109–A118. The residue at position 132 (Y132) is a Phosphotyrosine; by host. An interaction with human PPIA/CYPA and NUP153 region spans residues N189–Q227. The dimerization/Multimerization of capsid protein p24 stretch occupies residues Y277–L363. CCHC-type zinc fingers lie at residues V391 to A408 and K412 to E429. Positions E445–Q482 are disordered. A compositionally biased stretch (basic and acidic residues) spans R462–D471. Residues P489–L493 are dimerization of protease. The 70-residue stretch at R508–I577 folds into the Peptidase A2 domain. The For protease activity; shared with dimeric partner role is filled by D513. Dimerization of protease regions lie at residues G537 to K543 and N576 to P588. The 191-residue stretch at E631–L821 folds into the Reverse transcriptase domain. Mg(2+) contacts are provided by D697, D772, and D773. The tract at residues F814–H822 is RT 'primer grip'. Residues W985–W1001 carry the Tryptophan repeat motif motif. In terms of domain architecture, RNase H type-1 spans I1021–R1144. The Mg(2+) site is built by D1030, E1065, D1085, and D1136. Residues D1150 to Q1191 form an Integrase-type zinc finger. Residues H1159, H1163, C1187, and C1190 each contribute to the Zn(2+) site. An Integrase catalytic domain is found at V1201–I1351. Positions 1211, 1263, and 1299 each coordinate Mg(2+). Residues F1370–D1417 constitute a DNA-binding region (integrase-type).

Homotrimer; further assembles as hexamers of trimers. Interacts with gp41 (via C-terminus). Interacts with host CALM1; this interaction induces a conformational change in the Matrix protein, triggering exposure of the myristate group. Interacts with host AP3D1; this interaction allows the polyprotein trafficking to multivesicular bodies during virus assembly. Part of the pre-integration complex (PIC) which is composed of viral genome, matrix protein, Vpr and integrase. In terms of assembly, homodimer; the homodimer further multimerizes as homohexamers or homopentamers. Interacts with human PPIA/CYPA; This interaction stabilizes the capsid. Interacts with human NUP153. Interacts with host PDZD8; this interaction stabilizes the capsid. Interacts with monkey TRIM5; this interaction destabilizes the capsid. As to quaternary structure, homodimer, whose active site consists of two apposed aspartic acid residues. Heterodimer of p66 RT and p51 RT (RT p66/p51). Heterodimerization of RT is essential for DNA polymerase activity. The overall folding of the subdomains is similar in p66 RT and p51 RT but the spatial arrangements of the subdomains are dramatically different. In terms of assembly, homodimer; possibly can form homotetramer. Part of the pre-integration complex (PIC) which is composed of viral genome, matrix protein, Vpr and integrase. Interacts with human SMARCB1/INI1 and human PSIP1/LEDGF isoform 1. Interacts with human KPNA3; this interaction might play a role in nuclear import of the pre-integration complex. Interacts with human NUP153; this interaction might play a role in nuclear import of the pre-integration complex. Mg(2+) serves as cofactor. In terms of processing, specific enzymatic cleavages by the viral protease yield mature proteins. The protease is released by autocatalytic cleavage. The polyprotein is cleaved during and after budding, this process is termed maturation. Proteolytic cleavage of p66 RT removes the RNase H domain to yield the p51 RT subunit. Nucleocapsid protein p7 might be further cleaved after virus entry. Post-translationally, tyrosine phosphorylated presumably in the virion by a host kinase. Phosphorylation is apparently not a major regulator of membrane association. Phosphorylated possibly by host MAPK1; this phosphorylation is necessary for Pin1-mediated virion uncoating. In terms of processing, methylated by host PRMT6, impairing its function by reducing RNA annealing and the initiation of reverse transcription.

The protein resides in the host cell membrane. It is found in the host endosome. Its subcellular location is the host multivesicular body. The protein localises to the virion membrane. It localises to the host nucleus. The protein resides in the host cytoplasm. It is found in the virion. The enzyme catalyses Specific for a P1 residue that is hydrophobic, and P1' variable, but often Pro.. It carries out the reaction Endohydrolysis of RNA in RNA/DNA hybrids. Three different cleavage modes: 1. sequence-specific internal cleavage of RNA. Human immunodeficiency virus type 1 and Moloney murine leukemia virus enzymes prefer to cleave the RNA strand one nucleotide away from the RNA-DNA junction. 2. RNA 5'-end directed cleavage 13-19 nucleotides from the RNA end. 3. DNA 3'-end directed cleavage 15-20 nucleotides away from the primer terminus.. It catalyses the reaction 3'-end directed exonucleolytic cleavage of viral RNA-DNA hybrid.. The catalysed reaction is DNA(n) + a 2'-deoxyribonucleoside 5'-triphosphate = DNA(n+1) + diphosphate. With respect to regulation, protease: The viral protease is inhibited by many synthetic protease inhibitors (PIs), such as amprenavir, atazanavir, indinavir, loprinavir, nelfinavir, ritonavir and saquinavir. Use of protease inhibitors in tritherapy regimens permit more ambitious therapeutic strategies. Reverse transcriptase/ribonuclease H: RT can be inhibited either by nucleoside RT inhibitors (NRTIs) or by non nucleoside RT inhibitors (NNRTIs). NRTIs act as chain terminators, whereas NNRTIs inhibit DNA polymerization by binding a small hydrophobic pocket near the RT active site and inducing an allosteric change in this region. Classical NRTIs are abacavir, adefovir (PMEA), didanosine (ddI), lamivudine (3TC), stavudine (d4T), tenofovir (PMPA), zalcitabine (ddC), and zidovudine (AZT). Classical NNRTIs are atevirdine (BHAP U-87201E), delavirdine, efavirenz (DMP-266), emivirine (I-EBU), and nevirapine (BI-RG-587). The tritherapies used as a basic effective treatment of AIDS associate two NRTIs and one NNRTI. Mediates, with Gag polyprotein, the essential events in virion assembly, including binding the plasma membrane, making the protein-protein interactions necessary to create spherical particles, recruiting the viral Env proteins, and packaging the genomic RNA via direct interactions with the RNA packaging sequence (Psi). Gag-Pol polyprotein may regulate its own translation, by the binding genomic RNA in the 5'-UTR. At low concentration, the polyprotein would promote translation, whereas at high concentration, the polyprotein would encapsidate genomic RNA and then shut off translation. In terms of biological role, targets the polyprotein to the plasma membrane via a multipartite membrane-binding signal, that includes its myristoylated N-terminus. Matrix protein is part of the pre-integration complex. Implicated in the release from host cell mediated by Vpu. Binds to RNA. Its function is as follows. Forms the conical core that encapsulates the genomic RNA-nucleocapsid complex in the virion. Most core are conical, with only 7% tubular. The core is constituted by capsid protein hexamer subunits. The core is disassembled soon after virion entry. Host restriction factors such as TRIM5-alpha or TRIMCyp bind retroviral capsids and cause premature capsid disassembly, leading to blocks in reverse transcription. Capsid restriction by TRIM5 is one of the factors which restricts HIV-1 to the human species. Host PIN1 apparently facilitates the virion uncoating. On the other hand, interactions with PDZD8 or CYPA stabilize the capsid. Functionally, encapsulates and protects viral dimeric unspliced genomic RNA (gRNA). Binds these RNAs through its zinc fingers. Acts as a nucleic acid chaperone which is involved in rearangement of nucleic acid secondary structure during gRNA retrotranscription. Also facilitates template switch leading to recombination. As part of the polyprotein, participates in gRNA dimerization, packaging, tRNA incorporation and virion assembly. Aspartyl protease that mediates proteolytic cleavages of Gag and Gag-Pol polyproteins during or shortly after the release of the virion from the plasma membrane. Cleavages take place as an ordered, step-wise cascade to yield mature proteins. This process is called maturation. Displays maximal activity during the budding process just prior to particle release from the cell. Also cleaves Nef and Vif, probably concomitantly with viral structural proteins on maturation of virus particles. Hydrolyzes host EIF4GI and PABP1 in order to shut off the capped cellular mRNA translation. The resulting inhibition of cellular protein synthesis serves to ensure maximal viral gene expression and to evade host immune response. Also mediates cleavage of host YTHDF3. Mediates cleavage of host CARD8, thereby activating the CARD8 inflammasome, leading to the clearance of latent HIV-1 in patient CD4(+) T-cells after viral reactivation; in contrast, HIV-1 can evade CARD8-sensing when its protease remains inactive in infected cells prior to viral budding. In terms of biological role, multifunctional enzyme that converts the viral RNA genome into dsDNA in the cytoplasm, shortly after virus entry into the cell. This enzyme displays a DNA polymerase activity that can copy either DNA or RNA templates, and a ribonuclease H (RNase H) activity that cleaves the RNA strand of RNA-DNA heteroduplexes in a partially processive 3' to 5' endonucleasic mode. Conversion of viral genomic RNA into dsDNA requires many steps. A tRNA(3)-Lys binds to the primer-binding site (PBS) situated at the 5'-end of the viral RNA. RT uses the 3' end of the tRNA primer to perform a short round of RNA-dependent minus-strand DNA synthesis. The reading proceeds through the U5 region and ends after the repeated (R) region which is present at both ends of viral RNA. The portion of the RNA-DNA heteroduplex is digested by the RNase H, resulting in a ssDNA product attached to the tRNA primer. This ssDNA/tRNA hybridizes with the identical R region situated at the 3' end of viral RNA. This template exchange, known as minus-strand DNA strong stop transfer, can be either intra- or intermolecular. RT uses the 3' end of this newly synthesized short ssDNA to perform the RNA-dependent minus-strand DNA synthesis of the whole template. RNase H digests the RNA template except for two polypurine tracts (PPTs) situated at the 5'-end and near the center of the genome. It is not clear if both polymerase and RNase H activities are simultaneous. RNase H probably can proceed both in a polymerase-dependent (RNA cut into small fragments by the same RT performing DNA synthesis) and a polymerase-independent mode (cleavage of remaining RNA fragments by free RTs). Secondly, RT performs DNA-directed plus-strand DNA synthesis using the PPTs that have not been removed by RNase H as primers. PPTs and tRNA primers are then removed by RNase H. The 3' and 5' ssDNA PBS regions hybridize to form a circular dsDNA intermediate. Strand displacement synthesis by RT to the PBS and PPT ends produces a blunt ended, linear dsDNA copy of the viral genome that includes long terminal repeats (LTRs) at both ends. Its function is as follows. Catalyzes viral DNA integration into the host chromosome, by performing a series of DNA cutting and joining reactions. This enzyme activity takes place after virion entry into a cell and reverse transcription of the RNA genome in dsDNA. The first step in the integration process is 3' processing. This step requires a complex comprising the viral genome, matrix protein, Vpr and integrase. This complex is called the pre-integration complex (PIC). The integrase protein removes 2 nucleotides from each 3' end of the viral DNA, leaving recessed CA OH's at the 3' ends. In the second step, the PIC enters cell nucleus. This process is mediated through integrase and Vpr proteins, and allows the virus to infect a non dividing cell. This ability to enter the nucleus is specific of lentiviruses, other retroviruses cannot and rely on cell division to access cell chromosomes. In the third step, termed strand transfer, the integrase protein joins the previously processed 3' ends to the 5' ends of strands of target cellular DNA at the site of integration. The 5'-ends are produced by integrase-catalyzed staggered cuts, 5 bp apart. A Y-shaped, gapped, recombination intermediate results, with the 5'-ends of the viral DNA strands and the 3' ends of target DNA strands remaining unjoined, flanking a gap of 5 bp. The last step is viral DNA integration into host chromosome. This involves host DNA repair synthesis in which the 5 bp gaps between the unjoined strands are filled in and then ligated. Since this process occurs at both cuts flanking the HIV genome, a 5 bp duplication of host DNA is produced at the ends of HIV-1 integration. Alternatively, Integrase may catalyze the excision of viral DNA just after strand transfer, this is termed disintegration. In Homo sapiens (Human), this protein is Gag-Pol polyprotein (gag-pol).